Here is a 365-residue protein sequence, read N- to C-terminus: Probable UDP-arabinopyranose mutase 1 (365 aa).

A DXD motif motif is present at residues 100 to 102 (DDD). N-linked (Glc...) arginine glycosylation occurs at R148.

Belongs to the RGP family. As to quaternary structure, homopentamer or homohexamer. It depends on Mn(2+) as a cofactor. Mg(2+) serves as cofactor. Post-translationally, reversibly glycosylated by UDP-glucose, UDP-xylose and UDP-galactose, but not UDP-mannose. As to expression, expressed in all tissues tested, including root, tuber, leaf, petiole, shoot, stolon and stem.

It localises to the secreted. It is found in the cell wall. The protein resides in the cell junction. Its subcellular location is the plasmodesma. The protein localises to the golgi apparatus. The catalysed reaction is UDP-beta-L-arabinofuranose = UDP-beta-L-arabinopyranose. In terms of biological role, probable UDP-L-arabinose mutase involved in the biosynthesis of cell wall non-cellulosic polysaccharides. Was initially shown to possess an autoglycosylating activity which is dependent on the presence of UDP-glucose and manganese. The protein is Probable UDP-arabinopyranose mutase 1 of Solanum tuberosum (Potato).